The chain runs to 346 residues: Membrane progestin receptor alpha (346 aa).

Over 1-72 the chain is Cytoplasmic; sequence MAMAQKLSHL…RTLFQQHNEA (72 aa). A helical transmembrane segment spans residues 73-93; that stretch reads VNVWTHLLAALVLLLRLALFV. Residues 94 to 103 lie on the Extracellular side of the membrane; that stretch reads ETVDFWGDPH. Residues 104–124 form a helical membrane-spanning segment; the sequence is ALPLFIIVLASFTYLSFSALA. The Cytoplasmic portion of the chain corresponds to 125–137; sequence HLLQAKSEFWHYS. Residues 138-158 form a helical membrane-spanning segment; it reads FFFLDYVGVAVYQFGSALAHF. The Extracellular portion of the chain corresponds to 159–169; sequence YYAIEPAWHAQ. The chain crosses the membrane as a helical span at residues 170–190; sequence VQAVFLPMAAFLAWLSCIGSC. The Cytoplasmic segment spans residues 191-237; the sequence is YNKYIQKPGLLGRTCQEVPSVLAYALDISPVVHRIFVSSDPTTDDPA. A helical transmembrane segment spans residues 238 to 258; that stretch reads LLYHKCQVVFFLLAAAFFSTF. The Extracellular portion of the chain corresponds to 259–276; it reads MPERWFPGSCHVFGQGHQ. A helical transmembrane segment spans residues 277–297; that stretch reads LFHIFLVLCTLAQLEAVALDY. Residues 298 to 316 lie on the Cytoplasmic side of the membrane; sequence EARRPIYEPLHTHWPHNFS. The helical transmembrane segment at 317-337 threads the bilayer; the sequence is GLFLLTVGSSILTAFLLSQLV. Topologically, residues 338–346 are extracellular; it reads QRKLDQKTK.

The protein belongs to the ADIPOR family. As to expression, expressed in a wide range of tissues including ovary, testis, placenta, uterus and bladder.

Its subcellular location is the cell membrane. Functionally, plasma membrane progesterone (P4) receptor coupled to G proteins. Seems to act through a G(i) mediated pathway. May be involved in oocyte maturation. Involved in neurosteroid inhibition of apoptosis. Also binds dehydroepiandrosterone (DHEA), pregnanolone, pregnenolone and allopregnanolone. This Homo sapiens (Human) protein is Membrane progestin receptor alpha.